A 436-amino-acid chain; its full sequence is 3-ketoacyl-CoA thiolase (436 aa).

Catalysis depends on Cys99, which acts as the Acyl-thioester intermediate. Catalysis depends on proton acceptor residues His392 and Cys422.

This sequence belongs to the thiolase-like superfamily. Thiolase family. In terms of assembly, heterotetramer of two alpha chains (FadJ) and two beta chains (FadI).

Its subcellular location is the cytoplasm. It carries out the reaction an acyl-CoA + acetyl-CoA = a 3-oxoacyl-CoA + CoA. The protein operates within lipid metabolism; fatty acid beta-oxidation. Its function is as follows. Catalyzes the final step of fatty acid oxidation in which acetyl-CoA is released and the CoA ester of a fatty acid two carbons shorter is formed. In Salmonella typhimurium (strain LT2 / SGSC1412 / ATCC 700720), this protein is 3-ketoacyl-CoA thiolase.